The sequence spans 1616 residues: Protein Shroom2 (1616 aa).

Residues 26-108 (LVEVQLSGGA…TLKLVVKRRS (83 aa)) enclose the PDZ domain. 2 disordered regions span residues 128–159 (ELAA…LSSS) and 183–229 (HPSS…KADT). The segment covering 150 to 159 (SSSSHDLSSS) has biased composition (low complexity). Composition is skewed to polar residues over residues 186–197 (SRLSVAKSNSSI) and 220–229 (PDHTLSKADT). Ser231 bears the Phosphoserine mark. Positions 247-259 (QGGRQAQAAGDPQ) are enriched in low complexity. Disordered regions lie at residues 247 to 475 (QGGR…SGWQ), 502 to 678 (GALE…PLAG), 695 to 790 (TSFK…SEDT), 802 to 869 (EETS…LPRR), 881 to 1100 (KEQR…PSPA), 1115 to 1184 (PSVF…LTDK), 1268 to 1302 (AEPE…PGLS), and 1363 to 1389 (QRRK…VPAA). Residues 312 to 321 (SSPPPPPPPL) show a composition bias toward pro residues. Ser313 and Ser325 each carry phosphoserine. Residues 343-356 (AAAAQHFTALAQAQ) are compositionally biased toward low complexity. Residues 358-370 (RGDRRPELTDRPW) show a composition bias toward basic and acidic residues. Residues 405-415 (SSRLQASLSSS) are compositionally biased toward low complexity. Residue Ser413 is modified to Phosphoserine. An ASD1 domain is found at 684–773 (LKEAQARVLR…SEPEKMNEVG (90 aa)). Composition is skewed to basic and acidic residues over residues 754 to 770 (FTAE…EKMN) and 821 to 830 (IPRDKPERPR). A compositionally biased stretch (polar residues) spans 842 to 854 (WSRTTSLGDSLNA). Residues Ser851, Ser897, Ser921, Ser922, and Ser924 each carry the phosphoserine modification. Thr925 is subject to Phosphothreonine. Basic and acidic residues predominate over residues 926 to 958 (DHYKQEASVELRRQAGDPGEPREELPSAVRAEE). Ser974 is modified (phosphoserine). Residues 975–994 (PGSQQHPPSQKAPNPPTFSE) show a composition bias toward polar residues. Phosphoserine occurs at positions 1036 and 1039. A compositionally biased stretch (basic and acidic residues) spans 1068–1077 (PKREPRRYRA). A compositionally biased stretch (polar residues) spans 1159–1176 (LRLQTATMETSRSPSPQF). A phosphoserine mark is found at Ser1171, Ser1173, and Ser1297. An ASD2 domain is found at 1317-1611 (EELAREIVGK…QLKCLLDSLQ (295 aa)).

Belongs to the shroom family. In terms of assembly, interacts with F-actin. In terms of tissue distribution, abundant in retina and melanoma; also in brain, placenta, lung, kidney and pancreas.

It is found in the apical cell membrane. It localises to the cell junction. Its subcellular location is the tight junction. The protein localises to the cytoplasm. The protein resides in the cytoskeleton. May be involved in endothelial cell morphology changes during cell spreading. In the retinal pigment epithelium, may regulate the biogenesis of melanosomes and promote their association with the apical cell surface by inducing gamma-tubulin redistribution. This is Protein Shroom2 (SHROOM2) from Homo sapiens (Human).